The sequence spans 413 residues: Arginine biosynthesis bifunctional protein ArgJ (413 aa).

6 residues coordinate substrate: T158, K184, T195, E285, N408, and S413. T195 serves as the catalytic Nucleophile.

It belongs to the ArgJ family. Heterotetramer of two alpha and two beta chains.

The protein localises to the cytoplasm. The enzyme catalyses N(2)-acetyl-L-ornithine + L-glutamate = N-acetyl-L-glutamate + L-ornithine. It catalyses the reaction L-glutamate + acetyl-CoA = N-acetyl-L-glutamate + CoA + H(+). It functions in the pathway amino-acid biosynthesis; L-arginine biosynthesis; L-ornithine and N-acetyl-L-glutamate from L-glutamate and N(2)-acetyl-L-ornithine (cyclic): step 1/1. It participates in amino-acid biosynthesis; L-arginine biosynthesis; N(2)-acetyl-L-ornithine from L-glutamate: step 1/4. Catalyzes two activities which are involved in the cyclic version of arginine biosynthesis: the synthesis of N-acetylglutamate from glutamate and acetyl-CoA as the acetyl donor, and of ornithine by transacetylation between N(2)-acetylornithine and glutamate. The protein is Arginine biosynthesis bifunctional protein ArgJ of Brucella melitensis biotype 1 (strain ATCC 23456 / CCUG 17765 / NCTC 10094 / 16M).